A 231-amino-acid chain; its full sequence is UPF0749 protein YlxW (231 aa).

A signal peptide spans 1-34 (MRGKSAVLLSLIMLIAGFLISFSFQMTKENNKSA). Residues 44 to 94 (YALRDELLKQEKENKKFEKELYQKQNKVRQAENKLKKEKSEYYNVLEDTEK) adopt a coiled-coil conformation.

This sequence belongs to the UPF0749 family.

In terms of biological role, may be involved in cell division and sporulation. This is UPF0749 protein YlxW (ylxW) from Bacillus subtilis (strain 168).